The chain runs to 221 residues: Very-long-chain (3R)-3-hydroxyacyl-CoA dehydratase PASTICCINO 2B (221 aa).

The Cytoplasmic portion of the chain corresponds to 1–11 (MTGVGSAVRRL). A helical transmembrane segment spans residues 12 to 32 (YLSVYNWAVFFGWAQVLYYAV). Residues 33 to 51 (TTLLESGHEAVYAAVERPL) are Lumenal-facing. A helical membrane pass occupies residues 52 to 70 (QFAQTAAFLEILHGLVGLV). Topologically, residues 71–76 (RSPVSA) are cytoplasmic. Residues 77–95 (TLPQIGSRLFLTWGILWSF) form a helical membrane-spanning segment. Residues 96 to 100 (PETHS) are Lumenal-facing. Residues 101-121 (HILVTSLVISWSITEIIRYSF) traverse the membrane as a helical segment. Residues 122 to 141 (FGMKETFGFAPSWLLWLRYS) are Cytoplasmic-facing. The chain crosses the membrane as a helical span at residues 142–165 (TFMVLYPTGISSEVGLIYIALPYM). Catalysis depends on residues tyrosine 147 and glutamate 154. Over 166-184 (KATEKYCLRMPNKWNFSFD) the chain is Lumenal. The chain crosses the membrane as a helical span at residues 185-209 (FSYASILSLAVYVPGSPHMFTYMLA). At 210–221 (QRKKALAKAKAA) the chain is on the cytoplasmic side.

It belongs to the very long-chain fatty acids dehydratase HACD family.

The protein localises to the endoplasmic reticulum membrane. It catalyses the reaction a very-long-chain (3R)-3-hydroxyacyl-CoA = a very-long-chain (2E)-enoyl-CoA + H2O. It functions in the pathway lipid metabolism; fatty acid biosynthesis. Catalyzes the third of the four reactions of the long-chain fatty acids elongation cycle. This endoplasmic reticulum-bound enzymatic process, allows the addition of two carbons to the chain of long- and very long-chain fatty acids/VLCFAs per cycle. This enzyme catalyzes the dehydration of the 3-hydroxyacyl-CoA intermediate into trans-2,3-enoyl-CoA, within each cycle of fatty acid elongation. Thereby, it participates in the production of VLCFAs of different chain lengths that are involved in multiple biological processes as precursors of membrane lipids and lipid mediators. May be an anti-phosphatase that prevents CDKA-1 dephosphorylation and activation. Involved in the hormonal control of cell division and differentiation. Required for proliferation control of meristematic and non-meristematic cells. Negative regulator of the cell cycle. The sequence is that of Very-long-chain (3R)-3-hydroxyacyl-CoA dehydratase PASTICCINO 2B (PAS2B) from Oryza sativa subsp. japonica (Rice).